A 196-amino-acid chain; its full sequence is Lipoprotein signal peptidase (196 aa).

3 helical membrane passes run 43–63 (LMLK…GISF), 75–95 (AIFL…MICS), and 97–117 (TIGS…NLID). Catalysis depends on residues aspartate 126 and aspartate 144. A helical transmembrane segment spans residues 135–155 (YSFPVFNLADCFITLGVIILI).

This sequence belongs to the peptidase A8 family.

It localises to the cell inner membrane. The catalysed reaction is Release of signal peptides from bacterial membrane prolipoproteins. Hydrolyzes -Xaa-Yaa-Zaa-|-(S,diacylglyceryl)Cys-, in which Xaa is hydrophobic (preferably Leu), and Yaa (Ala or Ser) and Zaa (Gly or Ala) have small, neutral side chains.. Its pathway is protein modification; lipoprotein biosynthesis (signal peptide cleavage). This protein specifically catalyzes the removal of signal peptides from prolipoproteins. The protein is Lipoprotein signal peptidase of Rickettsia typhi (strain ATCC VR-144 / Wilmington).